A 476-amino-acid chain; its full sequence is S-adenosylmethionine-dependent nucleotide dehydratase (476 aa).

Residues 1-168 (MKTKITLSGF…LTANEVADLI (168 aa)) are cytidylate kinase-like domain. 9-17 (GFAGTGKST) contributes to the ATP binding site. One can recognise a Radical SAM core domain in the interval 176–400 (NAVSKIPSVN…HKDVETIVPE (225 aa)). The interval 183-476 (SVNFHLWQPC…DLRKEEVSYE (294 aa)) is prokaryotic viperin domain. Residues cysteine 192, cysteine 196, and cysteine 199 each coordinate [4Fe-4S] cluster.

In the N-terminal section; belongs to the cytidylate kinase-like family. The protein in the C-terminal section; belongs to the radical SAM superfamily. Viperin family. [4Fe-4S] cluster is required as a cofactor.

It carries out the reaction GTP + AH2 + S-adenosyl-L-methionine = 3'-deoxy-3',4'-didehydro-GTP + 5'-deoxyadenosine + L-methionine + A + H2O + H(+). Expression of pVip60 in E.coli (strain MG1655) confers resistance to phage T7; prevents culture collapse upon infection. Catalyzes the conversion of guanosine triphosphate (GTP) to 3'-deoxy-3',4'-didehydro-GTP (ddhGTP), probably via a SAM-dependent radical mechanism. The modified nucleotide represses transcription from T7 RNA polymerase-directed genes (possibly by acting as chain terminators), strongly suggesting these nucleotides block viral polymerase transcription. Its function is as follows. The N-terminus of the protein may generate NTP for use by the viperin domain. This is S-adenosylmethionine-dependent nucleotide dehydratase from Lacinutrix mariniflava (strain JCM 13824 / KCCM 42306 / AKS432).